The chain runs to 641 residues: Leucine-rich repeat receptor-like serine/threonine/tyrosine-protein kinase SOBIR1 (641 aa).

An N-terminal signal peptide occupies residues 1 to 31; it reads MAVPTGSANLFLRPLILAVLSFLLLSSFVSS. Residues 32–284 lie on the Extracellular side of the membrane; sequence VEWLDIDSSD…KKKKSKKKKV (253 aa). LRR repeat units lie at residues 112 to 133, 136 to 159, 160 to 182, 183 to 205, and 207 to 228; these read ELKELTLSNNQLVNAVPVDILS, QLEVLDLRKNRFSGQIPGNFSSLS, RLRILDLSSNKLSGNLNFLKNLR, NLENLSVANNLFSGKIPEQIVSF, and NLRFFDFSGNRYLEGPAPVMSS. A glycan (N-linked (GlcNAc...) asparagine) is linked at asparagine 154. Asparagine 186 is a glycosylation site (N-linked (GlcNAc...) asparagine). The segment at 243 to 278 is disordered; that stretch reads AETPTSSPTNKPNNSTTSKAPKGAPKPGKLKKKKKK. Polar residues predominate over residues 245–259; sequence TPTSSPTNKPNNSTT. Residue asparagine 256 is glycosylated (N-linked (GlcNAc...) asparagine). The span at 260–269 shows a compositional bias: low complexity; sequence SKAPKGAPKP. A helical membrane pass occupies residues 285–305; that stretch reads AAWILGFVVGAIGGTISGFVF. The Cytoplasmic segment spans residues 306 to 641; the sequence is SVLFKLIIQA…VRTMLSQIKH (336 aa). A Protein kinase domain is found at 347 to 641; that stretch reads LASLEIIGRG…VRTMLSQIKH (295 aa). Residues 353-361 and lysine 377 each bind ATP; that span reads IGRGGCGEV. The active-site Proton acceptor is aspartate 489.

This sequence belongs to the protein kinase superfamily. Ser/Thr protein kinase family. In terms of assembly, interacts with CST. Interacts with RLP23. Component of a trimeric complex composed of RLP23, SOBIR1 and BAK1. BAK1 is recruited into a pre-formed RLP23-SOBIR1 complex in a ligand-dependent manner. Post-translationally, autophosphorylated on Ser, Thr and Tyr residues. In terms of tissue distribution, mostly present in leaves and flowers, with increasing expression in older flowers.

The protein resides in the cell membrane. The catalysed reaction is L-seryl-[protein] + ATP = O-phospho-L-seryl-[protein] + ADP + H(+). It catalyses the reaction L-threonyl-[protein] + ATP = O-phospho-L-threonyl-[protein] + ADP + H(+). It carries out the reaction L-tyrosyl-[protein] + ATP = O-phospho-L-tyrosyl-[protein] + ADP + H(+). Dual specificity kinase acting on both serine/threonine- and tyrosine-containing substrates. Acting as a counterplayer of BIR1, promotes the activation of plant defense and cell death. Component of the RLP23-SOBIR1-BAK1 complex that mediates NLP-triggered immunity. Functions as an inhibitor/regulator of abscission, probably by regulating membrane trafficking during abscission. The polypeptide is Leucine-rich repeat receptor-like serine/threonine/tyrosine-protein kinase SOBIR1 (SOBIR1) (Arabidopsis thaliana (Mouse-ear cress)).